The sequence spans 464 residues: Soluble pyridine nucleotide transhydrogenase (464 aa).

FAD is bound at residue 35-44 (DSRRQVGGNC).

Belongs to the class-I pyridine nucleotide-disulfide oxidoreductase family. FAD serves as cofactor.

The protein localises to the cytoplasm. The catalysed reaction is NAD(+) + NADPH = NADH + NADP(+). Functionally, conversion of NADPH, generated by peripheral catabolic pathways, to NADH, which can enter the respiratory chain for energy generation. The polypeptide is Soluble pyridine nucleotide transhydrogenase (Pseudomonas fluorescens (strain SBW25)).